The chain runs to 480 residues: Dimethyl-sulfide monooxygenase (480 aa).

FMN-binding residues include aspartate 58, threonine 104, histidine 154, tyrosine 158, and serine 230. The interval 423 to 480 is disordered; the sequence is QDSYKPGSLRRKLIGTNDGRVESTHPAAQYRDAYVGKESVADRTQPSPFANAKAPVAE.

This sequence belongs to the NtaA/SnaA/DszA monooxygenase family. As to quaternary structure, heterodimer of 2 subunits, DmoA and DmoB. FMN serves as cofactor.

The enzyme catalyses dimethyl sulfide + NADH + O2 + H(+) = methanethiol + formaldehyde + NAD(+) + H2O. Inhibited by umbelliferone, 8-anilinonaphthalenesulfonate, a range of metal-chelating agents, and Hg(2+), Cd(2+) and Pb(2+) ions. Its function is as follows. Monooxygenase that mediates oxidation of dimethyl sulfide, the first step in dimethyl sulfide degradation pathway. Has much lower activity with diethyl sulfide and other short-chain alkyl methyl sulfides. The protein is Dimethyl-sulfide monooxygenase (dmoA) of Hyphomicrobium sulfonivorans.